The following is a 348-amino-acid chain: MIETDRIISANTAQTNDENVIDRAIRPKTLAEYEGQPAVREQMEIFIQAAKARKDALDHTLIFGPPGLGKTTLSNIIANEMGVELKQTSGPVLEKAGDLAALLTNLEENDVLFIDEIHRLSPVVEEILYPAMEDYQLDIMIGEGPAARSIKIDLPPFTLVGATTRAGLLTSPLRDRFGIIQRLEFYSIDDLSKIVYRSAKLLNLDITTDGAMEIAKRSRGTPRIANRLLRRVRDYAQVKGSGVICFEIADKALSMLKVDPVGFDHMDHRYLLTLMEKFAGGPVGLDTMSAALSEEKGTIEDVIEPYLIQQGYIMRTARGRIATLLAYNHFKLKIPDNLSADQQQTLSI.

The interval Thr4–Tyr186 is large ATPase domain (RuvB-L). ATP contacts are provided by residues Ile25, Arg26, Gly67, Lys70, Thr71, Thr72, Glu133 to Tyr135, Arg176, Tyr186, and Arg223. Thr71 is a binding site for Mg(2+). The tract at residues Ser187–Lys257 is small ATPAse domain (RuvB-S). Positions Pro260–Ile348 are head domain (RuvB-H). DNA-binding residues include Arg315 and Arg320.

The protein belongs to the RuvB family. In terms of assembly, homohexamer. Forms an RuvA(8)-RuvB(12)-Holliday junction (HJ) complex. HJ DNA is sandwiched between 2 RuvA tetramers; dsDNA enters through RuvA and exits via RuvB. An RuvB hexamer assembles on each DNA strand where it exits the tetramer. Each RuvB hexamer is contacted by two RuvA subunits (via domain III) on 2 adjacent RuvB subunits; this complex drives branch migration. In the full resolvosome a probable DNA-RuvA(4)-RuvB(12)-RuvC(2) complex forms which resolves the HJ.

It is found in the cytoplasm. The catalysed reaction is ATP + H2O = ADP + phosphate + H(+). Its function is as follows. The RuvA-RuvB-RuvC complex processes Holliday junction (HJ) DNA during genetic recombination and DNA repair, while the RuvA-RuvB complex plays an important role in the rescue of blocked DNA replication forks via replication fork reversal (RFR). RuvA specifically binds to HJ cruciform DNA, conferring on it an open structure. The RuvB hexamer acts as an ATP-dependent pump, pulling dsDNA into and through the RuvAB complex. RuvB forms 2 homohexamers on either side of HJ DNA bound by 1 or 2 RuvA tetramers; 4 subunits per hexamer contact DNA at a time. Coordinated motions by a converter formed by DNA-disengaged RuvB subunits stimulates ATP hydrolysis and nucleotide exchange. Immobilization of the converter enables RuvB to convert the ATP-contained energy into a lever motion, pulling 2 nucleotides of DNA out of the RuvA tetramer per ATP hydrolyzed, thus driving DNA branch migration. The RuvB motors rotate together with the DNA substrate, which together with the progressing nucleotide cycle form the mechanistic basis for DNA recombination by continuous HJ branch migration. Branch migration allows RuvC to scan DNA until it finds its consensus sequence, where it cleaves and resolves cruciform DNA. The sequence is that of Holliday junction branch migration complex subunit RuvB from Francisella tularensis subsp. tularensis (strain FSC 198).